Reading from the N-terminus, the 132-residue chain is Small ribosomal subunit protein uS8 (132 aa).

The protein belongs to the universal ribosomal protein uS8 family. In terms of assembly, part of the 30S ribosomal subunit. Contacts proteins S5 and S12.

Functionally, one of the primary rRNA binding proteins, it binds directly to 16S rRNA central domain where it helps coordinate assembly of the platform of the 30S subunit. In Mycolicibacterium vanbaalenii (strain DSM 7251 / JCM 13017 / BCRC 16820 / KCTC 9966 / NRRL B-24157 / PYR-1) (Mycobacterium vanbaalenii), this protein is Small ribosomal subunit protein uS8.